Reading from the N-terminus, the 268-residue chain is Glutamate racemase (268 aa).

Substrate is bound by residues 14–15 (DS) and 46–47 (YG). Residue cysteine 78 is the Proton donor/acceptor of the active site. 79–80 (NS) is a binding site for substrate. The active-site Proton donor/acceptor is cysteine 190. Position 191-192 (191-192 (TH)) interacts with substrate.

This sequence belongs to the aspartate/glutamate racemases family.

The catalysed reaction is L-glutamate = D-glutamate. The protein operates within cell wall biogenesis; peptidoglycan biosynthesis. Functionally, provides the (R)-glutamate required for cell wall biosynthesis. In Treponema pallidum (strain Nichols), this protein is Glutamate racemase.